Reading from the N-terminus, the 337-residue chain is Phenylalanine--tRNA ligase alpha subunit (337 aa).

Glu252 is a Mg(2+) binding site.

It belongs to the class-II aminoacyl-tRNA synthetase family. Phe-tRNA synthetase alpha subunit type 1 subfamily. As to quaternary structure, tetramer of two alpha and two beta subunits. It depends on Mg(2+) as a cofactor.

It localises to the cytoplasm. The catalysed reaction is tRNA(Phe) + L-phenylalanine + ATP = L-phenylalanyl-tRNA(Phe) + AMP + diphosphate + H(+). The sequence is that of Phenylalanine--tRNA ligase alpha subunit from Francisella tularensis subsp. novicida (strain U112).